The following is a 321-amino-acid chain: Ribosomal RNA small subunit methyltransferase H (321 aa).

Residues 42–44 (GGH), aspartate 62, phenylalanine 86, aspartate 107, and glutamine 114 each bind S-adenosyl-L-methionine.

Belongs to the methyltransferase superfamily. RsmH family.

It is found in the cytoplasm. It carries out the reaction cytidine(1402) in 16S rRNA + S-adenosyl-L-methionine = N(4)-methylcytidine(1402) in 16S rRNA + S-adenosyl-L-homocysteine + H(+). Its function is as follows. Specifically methylates the N4 position of cytidine in position 1402 (C1402) of 16S rRNA. This chain is Ribosomal RNA small subunit methyltransferase H, found in Herminiimonas arsenicoxydans.